A 354-amino-acid polypeptide reads, in one-letter code: Protein Wnt-11 (354 aa).

Residues 1–24 (MRARPQVCEALLFALALHTGVCYG) form the signal peptide. N-linked (GlcNAc...) asparagine glycosylation is found at Asn-40 and Asn-90. 3 cysteine pairs are disulfide-bonded: Cys-80–Cys-91, Cys-130–Cys-138, and Cys-140–Cys-157. N-linked (GlcNAc...) asparagine glycosylation is present at Asn-160. 8 cysteine pairs are disulfide-bonded: Cys-209/Cys-223, Cys-211/Cys-218, Cys-283/Cys-314, Cys-299/Cys-309, Cys-313/Cys-353, Cys-329/Cys-344, Cys-331/Cys-341, and Cys-336/Cys-337. A lipid anchor (O-palmitoleoyl serine; by PORCN) is attached at Ser-215. Asn-300 and Asn-304 each carry an N-linked (GlcNAc...) asparagine glycan.

This sequence belongs to the Wnt family. In terms of processing, palmitoleoylation is required for efficient binding to frizzled receptors. Depalmitoleoylation leads to Wnt signaling pathway inhibition.

The protein resides in the secreted. Its subcellular location is the extracellular space. The protein localises to the extracellular matrix. In terms of biological role, ligand for members of the frizzled family of seven transmembrane receptors. Probable developmental protein. May be a signaling molecule which affects the development of discrete regions of tissues. Is likely to signal over only few cell diameters. In Mus musculus (Mouse), this protein is Protein Wnt-11 (Wnt11).